Here is a 968-residue protein sequence, read N- to C-terminus: RNA polymerase-associated protein RapA (968 aa).

Residues 164–334 form the Helicase ATP-binding domain; it reads DVGRRHAPRV…FARLRLLDPN (171 aa). 177–184 is a binding site for ATP; it reads DEVGLGKT. The short motif at 280-283 is the DEAH box element; it reads DEAH. Residues 490–685 enclose the Helicase C-terminal domain; the sequence is RVEWLMGYLT…ALKAQLEQGR (196 aa).

This sequence belongs to the SNF2/RAD54 helicase family. RapA subfamily. In terms of assembly, interacts with the RNAP. Has a higher affinity for the core RNAP than for the holoenzyme. Its ATPase activity is stimulated by binding to RNAP.

Functionally, transcription regulator that activates transcription by stimulating RNA polymerase (RNAP) recycling in case of stress conditions such as supercoiled DNA or high salt concentrations. Probably acts by releasing the RNAP, when it is trapped or immobilized on tightly supercoiled DNA. Does not activate transcription on linear DNA. Probably not involved in DNA repair. This is RNA polymerase-associated protein RapA from Salmonella schwarzengrund (strain CVM19633).